A 262-amino-acid chain; its full sequence is Small ribosomal subunit protein uS2 (262 aa).

The segment at 240-262 (NLDEKEESQEAESTEENTTVESN) is disordered. The segment covering 243–254 (EKEESQEAESTE) has biased composition (acidic residues).

The protein belongs to the universal ribosomal protein uS2 family.

In Staphylococcus haemolyticus (strain JCSC1435), this protein is Small ribosomal subunit protein uS2.